The following is a 732-amino-acid chain: Catalase-peroxidase (732 aa).

The tract at residues 1 to 21 is disordered; it reads MSMAEMRCPFSGHGAATTPAS. Residues 1–22 form the signal peptide; the sequence is MSMAEMRCPFSGHGAATTPASA. The segment at residues 97 to 220 is a cross-link (tryptophyl-tyrosyl-methioninium (Trp-Tyr) (with M-246)); sequence WHSAGTYRLA…LAATEMGLIY (124 aa). The Proton acceptor role is filled by histidine 98. The tryptophyl-tyrosyl-methioninium (Tyr-Met) (with W-97) cross-link spans 220–246; it reads YVNPEGPHGEPDPVASGREVRDTFARM. Residue histidine 261 coordinates heme b.

Belongs to the peroxidase family. Peroxidase/catalase subfamily. In terms of assembly, homodimer or homotetramer. Heme b serves as cofactor. Formation of the three residue Trp-Tyr-Met cross-link is important for the catalase, but not the peroxidase activity of the enzyme.

The enzyme catalyses H2O2 + AH2 = A + 2 H2O. It catalyses the reaction 2 H2O2 = O2 + 2 H2O. Its function is as follows. Bifunctional enzyme with both catalase and broad-spectrum peroxidase activity. This is Catalase-peroxidase from Synechococcus sp. (strain RCC307).